Reading from the N-terminus, the 662-residue chain is PAN2-PAN3 deadenylation complex subunit PAN3 (662 aa).

2 disordered regions span residues 1–29 and 53–133; these read MASAGKPALDDSRRGTGSPKIKGRENAKD and DPHK…DTVT. A C3H1-type zinc finger spans residues 26-55; it reads NAKDTLCRNITIYGRCRYEDKGCAFNHDPH. Low complexity predominate over residues 75–102; it reads SFTPSLLSSNGSSPTSTPATTKKMTTIS. Polar residues predominate over residues 115-133; it reads SVVSRSNASTPGLRQDTVT. A pseudokinase domain region spans residues 263 to 525; that stretch reads QTLPNTQLPA…NIDVFITGIS (263 aa). ATP contacts are provided by residues Arg-315, 364–371, and 425–426; these read DYHPLSKT and SK. Residues 526–564 are a coiled coil; sequence SQLMSTFDSALHLDDQLTSDLSRELENGRLVRLMAKLNF. The knob domain stretch occupies residues 565 to 662; that stretch reads VNERPEYEHD…ALMKPARRMH (98 aa).

This sequence belongs to the protein kinase superfamily. PAN3 family. As to quaternary structure, homodimer. Forms a heterotrimer with a catalytic subunit pan2 to form the poly(A)-nuclease (PAN) deadenylation complex. Interacts (via PAM-2 motif) with poly(A)-binding protein pab1 (via PABC domain), conferring substrate specificity of the enzyme complex.

The protein resides in the cytoplasm. Functionally, regulatory subunit of the poly(A)-nuclease (PAN) deadenylation complex, one of two cytoplasmic mRNA deadenylases involved in mRNA turnover. PAN specifically shortens poly(A) tails of RNA and the activity is stimulated by poly(A)-binding protein pab1. PAN deadenylation is followed by rapid degradation of the shortened mRNA tails by the CCR4-NOT complex. Deadenylated mRNAs are then degraded by two alternative mechanisms, namely exosome-mediated 3'-5' exonucleolytic degradation, or deadenylation-dependent mRNA decaping and subsequent 5'-3' exonucleolytic degradation by xrn1. May also be involved in post-transcriptional maturation of mRNA poly(A) tails. pan3 acts as a positive regulator for PAN activity, recruiting the catalytic subunit pan2 to mRNA via its interaction with RNA and with pab1. The chain is PAN2-PAN3 deadenylation complex subunit PAN3 from Aspergillus fumigatus (strain ATCC MYA-4609 / CBS 101355 / FGSC A1100 / Af293) (Neosartorya fumigata).